Consider the following 389-residue polypeptide: Large envelope protein (389 aa).

The residue at position 1 (Met-1) is an N-acetylmethionine. Gly-2 carries the N-myristoyl glycine; by host lipid modification. The tract at residues 2-108 (GTNLSVPNPL…PPLRDSHPQA (107 aa)) is pre-S1. The interval 2 to 163 (GTNLSVPNPL…SARTGDPVTI (162 aa)) is pre-S. The Virion surface; in external conformation segment spans residues 2–170 (GTNLSVPNPL…VTIMENITSG (169 aa)). Residues 2–242 (GTNLSVPNPL…PGYRWMCLRR (241 aa)) are Intravirion; in internal conformation-facing. The segment covering 77–95 (VSTIPPPASTNRQSGRQPT) has biased composition (polar residues). The interval 77–103 (VSTIPPPASTNRQSGRQPTPISPPLRD) is disordered. Positions 109 to 163 (MQWNSTALHQALQDPRVRGLYLPAGGSSSGTVNPAPNIASHISSISARTGDPVTI) are pre-S2. Residues 171 to 191 (FLGPLLVLQAGFFLLTRILTI) form a helical membrane-spanning segment. Topologically, residues 192–242 (PQSLDSWWTSLNFLGGSPVCLGQNSQSPTSNHSPTSCPPICPGYRWMCLRR) are intravirion; in external conformation. The chain crosses the membrane as a helical span at residues 243 to 263 (FIIFLFILLLCLIFLLVLLDY). The Virion surface portion of the chain corresponds to 264 to 337 (QGMLPVCPLI…WASVRFSWLS (74 aa)). Asn-309 is a glycosylation site (N-linked (GlcNAc...) asparagine; by host). Residues 338-358 (LLVPFVQWFVGLSPTVWLSAI) traverse the membrane as a helical segment. Residues 359–364 (WMMWYW) lie on the Intravirion side of the membrane. The helical transmembrane segment at 365 to 387 (GPSLYSIVSPFIPLLPIFFCLWV) threads the bilayer. Residues 388 to 389 (YI) are Virion surface-facing.

It belongs to the orthohepadnavirus major surface antigen family. As to quaternary structure, in its internal form (Li-HBsAg), interacts with the capsid protein and with the isoform S. Interacts with host chaperone CANX. Associates with host chaperone CANX through its pre-S2 N glycan; this association may be essential for isoform M proper secretion. In terms of assembly, interacts with isoform L. Interacts with the antigens of satellite virus HDV (HDVAgs); this interaction is required for encapsidation of HDV genomic RNA. Isoform M is N-terminally acetylated by host at a ratio of 90%, and N-glycosylated by host at the pre-S2 region. In terms of processing, myristoylated.

It is found in the virion membrane. Its function is as follows. The large envelope protein exists in two topological conformations, one which is termed 'external' or Le-HBsAg and the other 'internal' or Li-HBsAg. In its external conformation the protein attaches the virus to cell receptors and thereby initiating infection. This interaction determines the species specificity and liver tropism. This attachment induces virion internalization predominantly through caveolin-mediated endocytosis. The large envelope protein also assures fusion between virion membrane and endosomal membrane. In its internal conformation the protein plays a role in virion morphogenesis and mediates the contact with the nucleocapsid like a matrix protein. In terms of biological role, the middle envelope protein plays an important role in the budding of the virion. It is involved in the induction of budding in a nucleocapsid independent way. In this process the majority of envelope proteins bud to form subviral lipoprotein particles of 22 nm of diameter that do not contain a nucleocapsid. The protein is Large envelope protein of Hepatitis B virus genotype A2 subtype adw (isolate Japan/Nishioka/1983) (HBV-A).